Reading from the N-terminus, the 84-residue chain is Cytochrome b559 subunit alpha (84 aa).

A helical membrane pass occupies residues I24–F38. H26 lines the heme pocket.

Belongs to the PsbE/PsbF family. As to quaternary structure, heterodimer of an alpha subunit and a beta subunit. PSII is composed of 1 copy each of membrane proteins PsbA, PsbB, PsbC, PsbD, PsbE, PsbF, PsbH, PsbI, PsbJ, PsbK, PsbL, PsbM, PsbT, PsbX, PsbY, Psb30/Ycf12, peripheral proteins PsbO, CyanoQ (PsbQ), PsbU, PsbV and a large number of cofactors. It forms dimeric complexes. Heme b serves as cofactor.

Its subcellular location is the cellular thylakoid membrane. This b-type cytochrome is tightly associated with the reaction center of photosystem II (PSII). PSII is a light-driven water:plastoquinone oxidoreductase that uses light energy to abstract electrons from H(2)O, generating O(2) and a proton gradient subsequently used for ATP formation. It consists of a core antenna complex that captures photons, and an electron transfer chain that converts photonic excitation into a charge separation. This Prochlorococcus marinus (strain MIT 9301) protein is Cytochrome b559 subunit alpha.